The primary structure comprises 231 residues: dTTP/UTP pyrophosphatase (231 aa).

Residue Asp85 is the Proton acceptor of the active site.

It belongs to the Maf family. YhdE subfamily. Requires a divalent metal cation as cofactor.

The protein resides in the cytoplasm. The enzyme catalyses dTTP + H2O = dTMP + diphosphate + H(+). The catalysed reaction is UTP + H2O = UMP + diphosphate + H(+). Its function is as follows. Nucleoside triphosphate pyrophosphatase that hydrolyzes dTTP and UTP. May have a dual role in cell division arrest and in preventing the incorporation of modified nucleotides into cellular nucleic acids. This chain is dTTP/UTP pyrophosphatase, found in Psychrobacter arcticus (strain DSM 17307 / VKM B-2377 / 273-4).